The following is a 463-amino-acid chain: MEGCTTRDSTGLGLGERFNQRGNVFLRLVSHVQCAIKFAKNHNLRLVIRNTGHDGSGRSSAPGSFEIHTHHLKHTHYHDDFQPVGAVTTSGPAVTVGAGVILGDLYAEGARQGYTVVGGVCPTVGFVGGFLQGGGVSGKFSHNRGLAVDNVLEIQAVTADGDLVVANDYHNQDLFWALRGGGGGTFAVVTQATVRVFPDVPCVTTQLAVSAPEGLDDHSWMQVLELLLRGLRSFNEERIAGEFHLRPDPLSAILTLHFLNTSDLDSVDRRLAALIDKFRTSEIPHIYSSKSHALEVPRSVEAKLYASHELTSVQMPVLYSLDPSYKVSYLNMGDPNDADFRNVYWGPNYERLLALKQKWDVDALFITRLGKRHDVMNTIPSTGAGADMRSFNRDIYDLLRNHAEDPRLNEVWTAINTVTEWVDWITSNGARMIPSDIAFRFWMLRVYMTHDWGCGLTSSTAEL.

Positions 16-199 (ERFNQRGNVF…TQATVRVFPD (184 aa)) constitute an FAD-binding PCMH-type domain.

It belongs to the oxygen-dependent FAD-linked oxidoreductase family. Requires FAD as cofactor.

The protein operates within alkaloid biosynthesis. Functionally, FAD-linked oxidoreductase; part of the gene cluster that mediates the biosynthesis of communesins, a prominent class of indole alkaloids with great potential as pharmaceuticals. Communesins are biosynthesized by the coupling of tryptamine and aurantioclavine, two building blocks derived from L-tryptophan. The L-tryptophan decarboxylase cnsB converts L-tryptophan to tryptamine, whereas the tryptophan dimethylallyltransferase cnsF converts L-tryptophan to 4-dimethylallyl tryptophan which is further transformed to aurantioclavine by the aurantioclavine synthase cnsA, probably aided by the catalase cnsD. The cytochrome P450 monooxygenase cnsC catalyzes the heterodimeric coupling between the two different indole moieties, tryptamine and aurantioclavine, to construct vicinal quaternary stereocenters and yield the heptacyclic communesin scaffold. The O-methyltransferase cnsE then methylates the communesin scaffold to produce communesin K, the simplest characterized communesin that contains the heptacyclic core. The dioxygenase cnsJ converts communesin K into communesin I. Acylation to introduce the hexadienyl group at position N16 of communesin I by the acyltransferase cnsK leads to the production of communesin B. The hexadienyl group is produced by the highly reducing polyketide synthase cnsI, before being hydrolytically removed from cnsI by the serine hydrolase cnsH, converted into hexadienyl-CoA by the CoA ligase cnsG, and then transferred to communesin I by cnsK. Surprisingly, cnsK may also be a promiscuous acyltransferase that can tolerate a range of acyl groups, including acetyl-, propionyl-, and butyryl-CoA, which lead to communesins A, G and H respectively. The roles of the alpha-ketoglutarate-dependent dioxygenases cnsM and cnsP have still to be determined. The chain is Aurantioclavine synthase cnsA from Penicillium expansum (Blue mold rot fungus).